A 327-amino-acid polypeptide reads, in one-letter code: E3 ubiquitin-protein ligase ZNRF4 (327 aa).

The first 28 residues, 1–28 (MARFAWTRVAPVALVTFWLVLSLSPTDA), serve as a signal peptide directing secretion. The Lumenal portion of the chain corresponds to 29 to 150 (QVNLSSVDFL…EPCPDPECHP (122 aa)). Asn31 is a glycosylation site (N-linked (GlcNAc...) asparagine). The chain crosses the membrane as a helical span at residues 151-171 (VVVASWALARALALAASTLFV). Residues 172–327 (LRQLWPWVRG…AQSEATSELS (156 aa)) are Cytoplasmic-facing. Residues 209–252 (CAICLDDYEEGERLKILPCAHAYHCRCIDPWFSRAAQRSCPLCK) form an RING-type; atypical zinc finger. Over residues 256–265 (ASTHDGSTDG) the composition is skewed to polar residues. Residues 256–279 (ASTHDGSTDGSVGGEEPPLPGHRP) are disordered.

Interacts with CANX. As to expression, expressed exclusively in spermatids (at protein level).

It localises to the endoplasmic reticulum membrane. It catalyses the reaction S-ubiquitinyl-[E2 ubiquitin-conjugating enzyme]-L-cysteine + [acceptor protein]-L-lysine = [E2 ubiquitin-conjugating enzyme]-L-cysteine + N(6)-ubiquitinyl-[acceptor protein]-L-lysine.. It functions in the pathway protein modification; protein ubiquitination. Its function is as follows. E3 ubiquitin-protein ligase that acts as a negative regulator of NOD2 signaling by mediating ubiquitination and degradation of RIPK2. Also catalyzes ubiquitination and proteasomal degradation of CANX within the endoplasmic reticulum. Could have a role in spermatogenesis. The polypeptide is E3 ubiquitin-protein ligase ZNRF4 (Mus musculus (Mouse)).